The chain runs to 384 residues: NAD-capped RNA hydrolase NPY1 (384 aa).

Residues cysteine 179, cysteine 182, cysteine 197, and cysteine 206 each contribute to the Zn(2+) site. One can recognise a Nudix hydrolase domain in the interval 219 to 351; that stretch reads PRTDPTVIIA…AGGYRVPFKN (133 aa). Positions 256, 272, 276, and 322 each coordinate Mg(2+). Residues 256-258, glutamate 272, glutamate 276, and glutamate 322 each bind substrate; that span reads AGF. A Nudix box motif is present at residues 257–278; sequence GFMEPSETIEEACIREIWEETG. The Microbody targeting signal motif lies at 378-380; it reads KTS.

This sequence belongs to the Nudix hydrolase family. NudC subfamily. As to quaternary structure, homodimer. Mg(2+) is required as a cofactor. Zn(2+) serves as cofactor.

Its subcellular location is the peroxisome. The enzyme catalyses a 5'-end NAD(+)-phospho-ribonucleoside in mRNA + H2O = a 5'-end phospho-adenosine-phospho-ribonucleoside in mRNA + beta-nicotinamide D-ribonucleotide + 2 H(+). It catalyses the reaction NAD(+) + H2O = beta-nicotinamide D-ribonucleotide + AMP + 2 H(+). The catalysed reaction is NADH + H2O = reduced beta-nicotinamide D-ribonucleotide + AMP + 2 H(+). Its function is as follows. mRNA decapping enzyme that specifically removes the nicotinamide adenine dinucleotide (NAD) cap from a subset of mRNAs by hydrolyzing the diphosphate linkage to produce nicotinamide mononucleotide (NMN) and 5' monophosphate mRNA. The NAD-cap is present at the 5'-end of some RNAs; in contrast to the canonical N7 methylguanosine (m7G) cap, the NAD cap promotes mRNA decay. Mediates the hydrolysis of some nucleoside diphosphate derivatives. This is NAD-capped RNA hydrolase NPY1 from Saccharomyces cerevisiae (strain ATCC 204508 / S288c) (Baker's yeast).